The chain runs to 252 residues: SPbeta prophage-derived uncharacterized protein YomH (252 aa).

This Bacillus subtilis (strain 168) protein is SPbeta prophage-derived uncharacterized protein YomH (yomH).